Reading from the N-terminus, the 127-residue chain is Protein YwpG (127 aa).

Interacts with both the D1 and D2 domains of dynamin-like protein DynA.

The protein localises to the cell membrane. The polypeptide is Protein YwpG (ywpG) (Bacillus subtilis (strain 168)).